We begin with the raw amino-acid sequence, 144 residues long: Universal stress protein F (144 aa).

This sequence belongs to the universal stress protein A family. As to quaternary structure, homodimer.

The protein is Universal stress protein F (uspF) of Salmonella typhi.